A 324-amino-acid polypeptide reads, in one-letter code: Beta-ketoacyl-[acyl-carrier-protein] synthase III (324 aa).

Catalysis depends on residues Cys-112 and His-249. An ACP-binding region spans residues 250-254 (QANRR). The active site involves Asn-279.

This sequence belongs to the thiolase-like superfamily. FabH family. Homodimer.

It localises to the cytoplasm. The catalysed reaction is malonyl-[ACP] + acetyl-CoA + H(+) = 3-oxobutanoyl-[ACP] + CO2 + CoA. The protein operates within lipid metabolism; fatty acid biosynthesis. Its function is as follows. Catalyzes the condensation reaction of fatty acid synthesis by the addition to an acyl acceptor of two carbons from malonyl-ACP. Catalyzes the first condensation reaction which initiates fatty acid synthesis and may therefore play a role in governing the total rate of fatty acid production. Possesses both acetoacetyl-ACP synthase and acetyl transacylase activities. Its substrate specificity determines the biosynthesis of branched-chain and/or straight-chain of fatty acids. The sequence is that of Beta-ketoacyl-[acyl-carrier-protein] synthase III from Streptococcus equi subsp. equi (strain 4047).